The chain runs to 291 residues: Acetyl-coenzyme A carboxylase carboxyl transferase subunit beta (291 aa).

The CoA carboxyltransferase N-terminal domain occupies 23–291 (VWHKCPSCTA…PPDLPVEESV (269 aa)). The Zn(2+) site is built by C27, C30, C46, and C49. The C4-type zinc-finger motif lies at 27–49 (CPSCTAVLYRVELERNLEVCPKC).

It belongs to the AccD/PCCB family. As to quaternary structure, acetyl-CoA carboxylase is a heterohexamer composed of biotin carboxyl carrier protein (AccB), biotin carboxylase (AccC) and two subunits each of ACCase subunit alpha (AccA) and ACCase subunit beta (AccD). The cofactor is Zn(2+).

It is found in the cytoplasm. It carries out the reaction N(6)-carboxybiotinyl-L-lysyl-[protein] + acetyl-CoA = N(6)-biotinyl-L-lysyl-[protein] + malonyl-CoA. The protein operates within lipid metabolism; malonyl-CoA biosynthesis; malonyl-CoA from acetyl-CoA: step 1/1. Component of the acetyl coenzyme A carboxylase (ACC) complex. Biotin carboxylase (BC) catalyzes the carboxylation of biotin on its carrier protein (BCCP) and then the CO(2) group is transferred by the transcarboxylase to acetyl-CoA to form malonyl-CoA. This is Acetyl-coenzyme A carboxylase carboxyl transferase subunit beta from Coxiella burnetii (strain RSA 331 / Henzerling II).